The sequence spans 263 residues: 3-methyl-2-oxobutanoate hydroxymethyltransferase (263 aa).

Residues Asp-44 and Asp-83 each contribute to the Mg(2+) site. 3-methyl-2-oxobutanoate contacts are provided by residues 44–45 (DS), Asp-83, and Lys-113. Glu-115 is a Mg(2+) binding site. The active-site Proton acceptor is Glu-183.

Belongs to the PanB family. In terms of assembly, homodecamer; pentamer of dimers. The cofactor is Mg(2+).

The protein localises to the cytoplasm. It carries out the reaction 3-methyl-2-oxobutanoate + (6R)-5,10-methylene-5,6,7,8-tetrahydrofolate + H2O = 2-dehydropantoate + (6S)-5,6,7,8-tetrahydrofolate. Its pathway is cofactor biosynthesis; (R)-pantothenate biosynthesis; (R)-pantoate from 3-methyl-2-oxobutanoate: step 1/2. Functionally, catalyzes the reversible reaction in which hydroxymethyl group from 5,10-methylenetetrahydrofolate is transferred onto alpha-ketoisovalerate to form ketopantoate. In Trichodesmium erythraeum (strain IMS101), this protein is 3-methyl-2-oxobutanoate hydroxymethyltransferase.